The chain runs to 344 residues: DNA-directed RNA polymerase subunit alpha (344 aa).

The tract at residues 1-238 (MKVIKTAPLI…KQLGVFGEKP (238 aa)) is alpha N-terminal domain (alpha-NTD). Residues 253-344 (DAKDLSAKIE…EKLEDKGGND (92 aa)) are alpha C-terminal domain (alpha-CTD).

Belongs to the RNA polymerase alpha chain family. In terms of assembly, homodimer. The RNAP catalytic core consists of 2 alpha, 1 beta, 1 beta' and 1 omega subunit. When a sigma factor is associated with the core the holoenzyme is formed, which can initiate transcription.

It catalyses the reaction RNA(n) + a ribonucleoside 5'-triphosphate = RNA(n+1) + diphosphate. DNA-dependent RNA polymerase catalyzes the transcription of DNA into RNA using the four ribonucleoside triphosphates as substrates. The polypeptide is DNA-directed RNA polymerase subunit alpha (Helicobacter acinonychis (strain Sheeba)).